Consider the following 99-residue polypeptide: Nucleoid-associated protein LL0120 (99 aa).

Belongs to the YbaB/EbfC family. As to quaternary structure, homodimer.

It localises to the cytoplasm. The protein resides in the nucleoid. Binds to DNA and alters its conformation. May be involved in regulation of gene expression, nucleoid organization and DNA protection. This is Nucleoid-associated protein LL0120 (ybcG) from Lactococcus lactis subsp. lactis (strain IL1403) (Streptococcus lactis).